The sequence spans 499 residues: ATP synthase subunit beta, chloroplastic (499 aa).

Gly170–Thr177 lines the ATP pocket.

The protein belongs to the ATPase alpha/beta chains family. As to quaternary structure, F-type ATPases have 2 components, CF(1) - the catalytic core - and CF(0) - the membrane proton channel. CF(1) has five subunits: alpha(3), beta(3), gamma(1), delta(1), epsilon(1). CF(0) has four main subunits: a(1), b(1), b'(1) and c(9-12).

The protein localises to the plastid. It localises to the chloroplast thylakoid membrane. It catalyses the reaction ATP + H2O + 4 H(+)(in) = ADP + phosphate + 5 H(+)(out). Its function is as follows. Produces ATP from ADP in the presence of a proton gradient across the membrane. The catalytic sites are hosted primarily by the beta subunits. This is ATP synthase subunit beta, chloroplastic from Ipomoea purpurea (Common morning glory).